Consider the following 130-residue polypeptide: MSDTWLDKVHWTPDGLVPVIAQEAGTNKVLMFAWMNRESLRLTAETGQAVYWSRSRNRLWHKGEESGHVQKVHEIRLDCDEDVILILVEQVGGIACHTGRHNCFFQKLEQDGWVTDQAIIKNPEDIYHHE.

A Mg(2+)-binding site is contributed by D78. C79 serves as a coordination point for Zn(2+). D80 and D82 together coordinate Mg(2+). Zn(2+) is bound by residues C96 and C103.

The protein belongs to the PRA-CH family. Homodimer. Mg(2+) is required as a cofactor. Zn(2+) serves as cofactor.

It is found in the cytoplasm. It catalyses the reaction 1-(5-phospho-beta-D-ribosyl)-5'-AMP + H2O = 1-(5-phospho-beta-D-ribosyl)-5-[(5-phospho-beta-D-ribosylamino)methylideneamino]imidazole-4-carboxamide. The protein operates within amino-acid biosynthesis; L-histidine biosynthesis; L-histidine from 5-phospho-alpha-D-ribose 1-diphosphate: step 3/9. In terms of biological role, catalyzes the hydrolysis of the adenine ring of phosphoribosyl-AMP. This is Phosphoribosyl-AMP cyclohydrolase from Methylobacillus flagellatus (strain ATCC 51484 / DSM 6875 / VKM B-1610 / KT).